The sequence spans 232 residues: Vacuolar iron transporter homolog 1 (232 aa).

The Cytoplasmic segment spans residues 1 to 59; that stretch reads MAIDLGCHVGCASPETKQEETADPTAAPVVVDDVEAAAGGRRPGDGGGVNYVARAQWLR. Residues 60–80 form a helical membrane-spanning segment; the sequence is AAVLGANDGLVSVASLMVGVG. At 81-89 the chain is on the vacuolar side; it reads AANGTRRAM. A helical membrane pass occupies residues 90–110; the sequence is LVSGLAGLVAGACSMAIGEFV. Topologically, residues 111–148 are cytoplasmic; sequence SVYAQCDIQAAQIERARGGKDADGGEEEEELPSPTMAA. A helical membrane pass occupies residues 149–169; the sequence is VASALSFAAGAALPLLAGGFV. Residues 170–175 lie on the Vacuolar side of the membrane; sequence RPWAAR. Residues 176–196 form a helical membrane-spanning segment; sequence VAAVCAASSLGLAGFGVASAY. Over 197–208 the chain is Cytoplasmic; the sequence is LGGAGVARSGVR. A helical transmembrane segment spans residues 209-229; sequence MLVGGWLAMAVTYGVLKLFGM. The Vacuolar segment spans residues 230–232; that stretch reads HGV.

This sequence belongs to the CCC1 family.

It localises to the vacuole membrane. It carries out the reaction Fe(2+)(in) = Fe(2+)(out). Probable vacuolar iron transporter that may be involved in the regulation of iron distribution throughout the plant. The polypeptide is Vacuolar iron transporter homolog 1 (Oryza sativa subsp. japonica (Rice)).